The sequence spans 465 residues: Crh-like protein ARB_05253 (465 aa).

A signal peptide spans 1 to 21 (MKLSLAAALLGALAVSAQTST). A GH16 domain is found at 22-223 (ECNPLKQKCP…WAGGETDFSK (202 aa)). C23 and C30 are disulfide-bonded. The active-site Nucleophile is E114. The active-site Proton donor is the E118. 3 residues coordinate chitin: E118, W200, and T211. Disordered stretches follow at residues 261-325 (GQVN…STMT) and 339-442 (TGTG…PGST). N264 is a glycosylation site (N-linked (GlcNAc...) asparagine). Over residues 277-287 (SSTLPSSPSTS) the composition is skewed to low complexity. Positions 304-325 (QAPNTGSSPSNTLTNGPSSTMT) are enriched in polar residues. 3 stretches are compositionally biased toward low complexity: residues 339–348 (TGTGGVVTPT), 361–376 (TSRS…SASS), and 383–397 (MTTS…TGTG). S441 carries the GPI-anchor amidated serine lipid modification. A propeptide spans 442–465 (TGAIHSVSNALLLSFCAIAAWALV) (removed in mature form).

Belongs to the glycosyl hydrolase 16 family. CRH1 subfamily. In terms of processing, the GPI-anchor is attached to the protein in the endoplasmic reticulum and serves to target the protein to the cell surface. There, the glucosamine-inositol phospholipid moiety is cleaved off and the GPI-modified mannoprotein is covalently attached via its lipidless GPI glycan remnant to the 1,6-beta-glucan of the outer cell wall layer.

The protein resides in the secreted. It localises to the cell wall. Its subcellular location is the membrane. The enzyme catalyses Random endo-hydrolysis of N-acetyl-beta-D-glucosaminide (1-&gt;4)-beta-linkages in chitin and chitodextrins.. In terms of biological role, dual chitinase/transglycosylase that plays a role in cell wall architecture. Chitinase and transglycosylase activities are coupled. Required for the polysaccharide cross-linking at the septa and the cell wall. More specifically, transfers chitin to 1,6-beta-glucan in the cell wall. This chain is Crh-like protein ARB_05253, found in Arthroderma benhamiae (strain ATCC MYA-4681 / CBS 112371) (Trichophyton mentagrophytes).